Here is a 231-residue protein sequence, read N- to C-terminus: CLAVATA3/ESR (CLE)-related protein 4B-2 (231 aa).

An N-terminal signal peptide occupies residues 1 to 21 (MATNTMLCLLILSVVLALAFA). Residues 21-83 (ATNKKGDEEP…SNQLPNNNWM (63 aa)) form a required for secretion from the host cytoplasm to the host apoplasm region. N-linked (GlcNAc...) asparagine glycosylation is present at asparagine 32. The segment at 116–231 (RKTGMHSQRH…APAGPDPIHH (116 aa)) is disordered. Basic and acidic residues-rich tracts occupy residues 125–137 (HHEE…EKRV) and 144–221 (PIHH…EKRG). An A-1 repeat occupies 127–135 (EETTLEQEK). Residues 127–219 (EETTLEQEKR…HEETTFEQEK (93 aa)) form a 5 X approximate repeat A region. One copy of the CLE-1 repeat lies at 136 to 147 (RVAGAGPDPIHH). Positions 136–231 (RVAGAGPDPI…APAGPDPIHH (96 aa)) are 5 X approximate repeat CLE. The A-2 repeat unit spans residues 148–156 (EETTLEQEK). The CLE-2 repeat unit spans residues 157-168 (RAVPAGPDPKHH). The stretch at 169–177 (EETTLEQEK) is one A-3 repeat. One copy of the CLE-3 repeat lies at 178-189 (RAVPAGPDPKHH). The stretch at 190–198 (EETTLEQEK) is one A-4 repeat. A CLE-4 repeat occupies 199–210 (RAVPAGPDPKHH). Residues 211–219 (EETTFEQEK) form an A-5 repeat. One copy of the CLE-5 repeat lies at 220–231 (RGAPAGPDPIHH).

It belongs to the CLV3/ESR signal peptide family. Highly expressed exclusively within the dorsal esophageal gland cell during syncytium formation in host plants.

It localises to the secreted. The protein localises to the host cytoplasm. Its subcellular location is the host extracellular space. The protein resides in the extracellular space. It is found in the apoplast. In terms of biological role, mimics host plant CLE extracellular signal peptides that regulate cell fate. May play a role in the differentiation or division of feeding cells (syncytia) induced in plant roots during infection. The protein is CLAVATA3/ESR (CLE)-related protein 4B-2 (CLE-4B-2) of Globodera rostochiensis (Golden nematode worm).